Here is a 278-residue protein sequence, read N- to C-terminus: Bis(5'-nucleosyl)-tetraphosphatase, symmetrical (278 aa).

This sequence belongs to the Ap4A hydrolase family.

It catalyses the reaction P(1),P(4)-bis(5'-adenosyl) tetraphosphate + H2O = 2 ADP + 2 H(+). Functionally, hydrolyzes diadenosine 5',5'''-P1,P4-tetraphosphate to yield ADP. In Methylococcus capsulatus (strain ATCC 33009 / NCIMB 11132 / Bath), this protein is Bis(5'-nucleosyl)-tetraphosphatase, symmetrical.